Consider the following 238-residue polypeptide: Ribonuclease PH (238 aa).

Phosphate-binding positions include arginine 86 and glycine 124–arginine 126.

It belongs to the RNase PH family. Homohexameric ring arranged as a trimer of dimers.

It catalyses the reaction tRNA(n+1) + phosphate = tRNA(n) + a ribonucleoside 5'-diphosphate. Its function is as follows. Phosphorolytic 3'-5' exoribonuclease that plays an important role in tRNA 3'-end maturation. Removes nucleotide residues following the 3'-CCA terminus of tRNAs; can also add nucleotides to the ends of RNA molecules by using nucleoside diphosphates as substrates, but this may not be physiologically important. Probably plays a role in initiation of 16S rRNA degradation (leading to ribosome degradation) during starvation. The polypeptide is Ribonuclease PH (Shigella dysenteriae serotype 1 (strain Sd197)).